We begin with the raw amino-acid sequence, 388 residues long: MKIHEYQGKEILRKFGVAVPRGKPAFSVDEAVKVAEELGGPVWVVKAQIHAGGRGKGGGVKVAKTIEQVREYANQILGMQLVTHQTGPEGQKVNRLLIEEGADIKQELYVSLVVDRVSQKIVLMGSSEGGMDIEEVAEKHPELIHKVIVEPSTGLLDAQADDLAAKIGVPAASIPQARTILQGLYKAFWETDASLAEINPLNVSGDGKVTALDAKFNFDSNALFRHPEIVAYRDLDEEDPAEIEASKFDLAYISLDGNIGCLVNGAGLAMATMDTIKLFGGEPANFLDVGGGATTEKVTEAFKLMLKNPGLKAILVNIFGGIMRCDVIAEGVIAGSKAVNLNVPLVVRMKGTNEDLGKKMLADSGLPIISADSMEEAAQKVVAAAAGK.

The ATP-grasp domain occupies 9–244; the sequence is KEILRKFGVA…LDEEDPAEIE (236 aa). ATP contacts are provided by residues lysine 46, 53–55, glutamate 99, alanine 102, and glutamate 107; that span reads GRG. The Mg(2+) site is built by asparagine 199 and aspartate 213. Residues asparagine 264 and 321-323 contribute to the substrate site; that span reads GIM.

The protein belongs to the succinate/malate CoA ligase beta subunit family. Heterotetramer of two alpha and two beta subunits. Requires Mg(2+) as cofactor.

It catalyses the reaction succinate + ATP + CoA = succinyl-CoA + ADP + phosphate. It carries out the reaction GTP + succinate + CoA = succinyl-CoA + GDP + phosphate. The protein operates within carbohydrate metabolism; tricarboxylic acid cycle; succinate from succinyl-CoA (ligase route): step 1/1. Its function is as follows. Succinyl-CoA synthetase functions in the citric acid cycle (TCA), coupling the hydrolysis of succinyl-CoA to the synthesis of either ATP or GTP and thus represents the only step of substrate-level phosphorylation in the TCA. The beta subunit provides nucleotide specificity of the enzyme and binds the substrate succinate, while the binding sites for coenzyme A and phosphate are found in the alpha subunit. The polypeptide is Succinate--CoA ligase [ADP-forming] subunit beta (Burkholderia vietnamiensis (strain G4 / LMG 22486) (Burkholderia cepacia (strain R1808))).